The chain runs to 372 residues: Peptidyl-prolyl cis-trans isomerase D (372 aa).

The region spanning 10–173 (FFDIQIGQQQ…TDVTIAECGE (164 aa)) is the PPIase cyclophilin-type domain. Positions 174–193 (LTGEDYDNADKQTPDATGDP) are disordered. TPR repeat units lie at residues 215 to 248 (ASELKNFGNTAFKNGNIALGLEKYQKGLRYLNEF), 268 to 304 (FTLHSNSSLLANKLGQFKNGKTWATYALDVADAASAK), and 309 to 342 (AKVYYRRAVAESGLKEEDEALKDLEQASTLAPSD).

It belongs to the cyclophilin-type PPIase family. PPIase D subfamily.

It is found in the cytoplasm. The catalysed reaction is [protein]-peptidylproline (omega=180) = [protein]-peptidylproline (omega=0). Functionally, PPIases accelerate the folding of proteins. It catalyzes the cis-trans isomerization of proline imidic peptide bonds in oligopeptides. In Emericella nidulans (strain FGSC A4 / ATCC 38163 / CBS 112.46 / NRRL 194 / M139) (Aspergillus nidulans), this protein is Peptidyl-prolyl cis-trans isomerase D (cpr6).